We begin with the raw amino-acid sequence, 323 residues long: tRNA-dihydrouridine(20/20a) synthase (323 aa).

Residues 14 to 16 (PML) and Gln-66 contribute to the FMN site. Cys-96 serves as the catalytic Proton donor. Residues Lys-135, His-166, 206-208 (NGG), and 228-229 (GR) each bind FMN.

The protein belongs to the Dus family. DusA subfamily. The cofactor is FMN.

The catalysed reaction is 5,6-dihydrouridine(20) in tRNA + NADP(+) = uridine(20) in tRNA + NADPH + H(+). It catalyses the reaction 5,6-dihydrouridine(20) in tRNA + NAD(+) = uridine(20) in tRNA + NADH + H(+). The enzyme catalyses 5,6-dihydrouridine(20a) in tRNA + NADP(+) = uridine(20a) in tRNA + NADPH + H(+). It carries out the reaction 5,6-dihydrouridine(20a) in tRNA + NAD(+) = uridine(20a) in tRNA + NADH + H(+). Functionally, catalyzes the synthesis of 5,6-dihydrouridine (D), a modified base found in the D-loop of most tRNAs, via the reduction of the C5-C6 double bond in target uridines. Specifically modifies U20 and U20a in tRNAs. The chain is tRNA-dihydrouridine(20/20a) synthase from Haemophilus ducreyi (strain 35000HP / ATCC 700724).